Reading from the N-terminus, the 219-residue chain is Mediator of RNA polymerase II transcription subunit 21 (219 aa).

A coiled-coil region spans residues 86–125 (SAEEQLHKIDSLQKKLVDIEDEKIHAIKKKDDLLKQVDDL). The disordered stretch occupies residues 141–219 (SLAPENVQED…ISESISPGKI (79 aa)). 2 stretches are compositionally biased toward basic and acidic residues: residues 166–181 (IEQK…KIEG) and 191–204 (SDSK…FMDK). Residues 210–219 (ISESISPGKI) are compositionally biased toward polar residues.

The protein belongs to the Mediator complex subunit 21 family. In terms of assembly, component of the Mediator complex.

The protein localises to the nucleus. In terms of biological role, component of the Mediator complex, a coactivator involved in the regulated transcription of nearly all RNA polymerase II-dependent genes. Mediator functions as a bridge to convey information from gene-specific regulatory proteins to the basal RNA polymerase II transcription machinery. Mediator is recruited to promoters by direct interactions with regulatory proteins and serves as a scaffold for the assembly of a functional preinitiation complex with RNA polymerase II and the general transcription factors. The sequence is that of Mediator of RNA polymerase II transcription subunit 21 (SRB7) from Candida glabrata (strain ATCC 2001 / BCRC 20586 / JCM 3761 / NBRC 0622 / NRRL Y-65 / CBS 138) (Yeast).